A 206-amino-acid chain; its full sequence is Putative type I restriction enzyme MpnIIP endonuclease subunit C-terminal part (206 aa).

In terms of biological role, the C-terminal section of a putative type I restriction enzyme that if reconstituted might recognize 5'-GAN(7)TAY-3' and cleave a random distance away. Subunit R is required for both nuclease and ATPase activities, but not for modification. In Mycoplasma pneumoniae (strain ATCC 29342 / M129 / Subtype 1) (Mycoplasmoides pneumoniae), this protein is Putative type I restriction enzyme MpnIIP endonuclease subunit C-terminal part.